Reading from the N-terminus, the 124-residue chain is Small ribosomal subunit protein bS6 (124 aa).

The segment at 96–124 (ETGPSPMMKEVQREEAKKAAAAQPAEAQA) is disordered. Residues 114 to 124 (AAAAQPAEAQA) are compositionally biased toward low complexity.

Belongs to the bacterial ribosomal protein bS6 family.

In terms of biological role, binds together with bS18 to 16S ribosomal RNA. This Burkholderia orbicola (strain MC0-3) protein is Small ribosomal subunit protein bS6.